Reading from the N-terminus, the 309-residue chain is Peptidyl-prolyl cis-trans isomerase 9 (309 aa).

The PPIase cyclophilin-type domain maps to 8-173; sequence FLDISVDENL…AKVLISNCGE (166 aa). Composition is skewed to basic and acidic residues over residues 217–229, 239–265, 280–289, and 296–309; these read NEKK…DKRR, RSHE…RDEN, ERSATPEHWR, and WVHD…EDLV. Residues 217 to 309 form a disordered region; the sequence is NEKKHEMRND…SHKHPEEDLV (93 aa).

Belongs to the cyclophilin-type PPIase family. As to expression, co-expressed with pdi-1 in the syncytial hypodermis.

It carries out the reaction [protein]-peptidylproline (omega=180) = [protein]-peptidylproline (omega=0). PPIases accelerate the folding of proteins. It catalyzes the cis-trans isomerization of proline imidic peptide bonds in oligopeptides. Thought to function as a catalyst in the folding and modification of cuticle collagens. This is Peptidyl-prolyl cis-trans isomerase 9 (cyn-9) from Caenorhabditis elegans.